The primary structure comprises 304 residues: Acetyl-coenzyme A carboxylase carboxyl transferase subunit beta (304 aa).

The CoA carboxyltransferase N-terminal domain maps to 23 to 292 (VWTKCDSCGQ…PNPEAPREGV (270 aa)). Residues cysteine 27, cysteine 30, cysteine 46, and cysteine 49 each contribute to the Zn(2+) site. The segment at 27 to 49 (CDSCGQVLYRAELERNLEVCPKC) adopts a C4-type zinc-finger fold. The tract at residues 285-304 (PEAPREGVVVPPVPDQEPEA) is disordered. A compositionally biased stretch (pro residues) spans 295–304 (PPVPDQEPEA).

Belongs to the AccD/PCCB family. In terms of assembly, acetyl-CoA carboxylase is a heterohexamer composed of biotin carboxyl carrier protein (AccB), biotin carboxylase (AccC) and two subunits each of ACCase subunit alpha (AccA) and ACCase subunit beta (AccD). The cofactor is Zn(2+).

Its subcellular location is the cytoplasm. It catalyses the reaction N(6)-carboxybiotinyl-L-lysyl-[protein] + acetyl-CoA = N(6)-biotinyl-L-lysyl-[protein] + malonyl-CoA. Its pathway is lipid metabolism; malonyl-CoA biosynthesis; malonyl-CoA from acetyl-CoA: step 1/1. In terms of biological role, component of the acetyl coenzyme A carboxylase (ACC) complex. Biotin carboxylase (BC) catalyzes the carboxylation of biotin on its carrier protein (BCCP) and then the CO(2) group is transferred by the transcarboxylase to acetyl-CoA to form malonyl-CoA. This is Acetyl-coenzyme A carboxylase carboxyl transferase subunit beta from Escherichia coli O6:H1 (strain CFT073 / ATCC 700928 / UPEC).